The primary structure comprises 413 residues: Serine hydroxymethyltransferase (413 aa).

(6S)-5,6,7,8-tetrahydrofolate-binding positions include Leu119 and 123-125; that span reads GHL. An N6-(pyridoxal phosphate)lysine modification is found at Lys228.

It belongs to the SHMT family. In terms of assembly, homodimer. It depends on pyridoxal 5'-phosphate as a cofactor.

It is found in the cytoplasm. The enzyme catalyses (6R)-5,10-methylene-5,6,7,8-tetrahydrofolate + glycine + H2O = (6S)-5,6,7,8-tetrahydrofolate + L-serine. The protein operates within one-carbon metabolism; tetrahydrofolate interconversion. It participates in amino-acid biosynthesis; glycine biosynthesis; glycine from L-serine: step 1/1. Functionally, catalyzes the reversible interconversion of serine and glycine with tetrahydrofolate (THF) serving as the one-carbon carrier. This reaction serves as the major source of one-carbon groups required for the biosynthesis of purines, thymidylate, methionine, and other important biomolecules. Also exhibits THF-independent aldolase activity toward beta-hydroxyamino acids, producing glycine and aldehydes, via a retro-aldol mechanism. The protein is Serine hydroxymethyltransferase of Caldanaerobacter subterraneus subsp. tengcongensis (strain DSM 15242 / JCM 11007 / NBRC 100824 / MB4) (Thermoanaerobacter tengcongensis).